Consider the following 144-residue polypeptide: Large ribosomal subunit protein uL15 (144 aa).

The span at 1–18 shows a compositional bias: basic and acidic residues; sequence MRLNDLHPAEGSRPEGKR. Residues 1–58 form a disordered region; the sequence is MRLNDLHPAEGSRPEGKRVGRGIGSGLGKTGGRGHKGQKSRSGGSVKPGFEGGQMPLQ. A compositionally biased stretch (gly residues) spans 21-31; it reads RGIGSGLGKTG.

It belongs to the universal ribosomal protein uL15 family. In terms of assembly, part of the 50S ribosomal subunit.

In terms of biological role, binds to the 23S rRNA. The polypeptide is Large ribosomal subunit protein uL15 (Alcanivorax borkumensis (strain ATCC 700651 / DSM 11573 / NCIMB 13689 / SK2)).